We begin with the raw amino-acid sequence, 297 residues long: Syntaxin-4 (297 aa).

A compositionally biased stretch (basic and acidic residues) spans 1–12 (MRDRTHELRQGD). The interval 1 to 21 (MRDRTHELRQGDDSSDDEDKE) is disordered. Topologically, residues 1–275 (MRDRTHELRQ…QKKARKKKVF (275 aa)) are cytoplasmic. A phosphoserine mark is found at S14 and S15. T31 carries the phosphothreonine modification. S36, S117, S208, and S248 each carry phosphoserine. A coiled-coil region spans residues 43–163 (QKVRTIRQTI…ERIRRQLKIT (121 aa)). The region spanning 200–262 (LNEISARHSE…ERGQEHVKVA (63 aa)) is the t-SNARE coiled-coil homology domain. A helical; Anchor for type IV membrane protein membrane pass occupies residues 276–296 (IAICLSITVLILVVIIVISTL). V297 is a topological domain (extracellular).

This sequence belongs to the syntaxin family. In terms of assembly, component of the SNARE complex composed of STX4, SNAP23 and VAMP7 that interacts with SYT7 during lysosomal exocytosis. Found in a complex with VAMP8 and SNAP23. Detected in a complex with SNAP23 and STXBP4. Interacts with VAMP2. Interacts with SNAP23 and SNAPIN. Interacts with LLGL1. Interacts (via C-terminus) with CENPF. Interacts with DOC2B. Interacts with STXBP6. Interacts with STXBP3; excludes interaction with DOC2B and SNAP25. Interacts with STXBP4; excludes interaction with VAMP2. Interacts with STXBP5L.

Its subcellular location is the cell membrane. It is found in the cell projection. The protein localises to the neuron projection. The protein resides in the stereocilium. In terms of biological role, plasma membrane t-SNARE that mediates docking of transport vesicles. Necessary for the translocation of SLC2A4 from intracellular vesicles to the plasma membrane. In neurons, recruited at neurite tips to membrane domains rich in the phospholipid 1-oleoyl-2-palmitoyl-PC (OPPC) which promotes neurite tip surface expression of the dopamine transporter SLC6A3/DAT by facilitating fusion of SLC6A3-containing transport vesicles with the plasma membrane. Together with STXB3 and VAMP2, may also play a role in docking/fusion of intracellular GLUT4-containing vesicles with the cell surface in adipocytes and in docking of synaptic vesicles at presynaptic active zones. Required for normal hearing. This chain is Syntaxin-4 (STX4), found in Bos taurus (Bovine).